Consider the following 250-residue polypeptide: Probable chemoreceptor glutamine deamidase CheD (250 aa).

The protein belongs to the CheD family.

The enzyme catalyses L-glutaminyl-[protein] + H2O = L-glutamyl-[protein] + NH4(+). Probably deamidates glutamine residues to glutamate on methyl-accepting chemotaxis receptors (MCPs), playing an important role in chemotaxis. This chain is Probable chemoreceptor glutamine deamidase CheD, found in Paraburkholderia xenovorans (strain LB400).